We begin with the raw amino-acid sequence, 388 residues long: MSWWWKRSIGAGKNLPNQNKENGVCKSYKSVALVVGVTGIVGSSLAEVLKLPDTPGGPWKVYGVARRPCPVWLAKKPVEYIQCDVSDNQETISKLSPLKDITHIFYVSWIGSEDCQTNATMFKNILNSVIPNASNLQHVCLQTGIKHYFGIFEEGSKVVPHDSPFTEDLPRLNVPNFYHDLEDILYEETGKNNLTWSVHRPALVFGFSPCSMMNIVSTLCVYATICKHENKALVYPGSKNSWNCYADAVDADLVAEHEIWAAVDPKAKNQVLNCNNGDVFKWKHIWKKLAEEFGIEMVGYVEGKEQVSLAELMKDKDQVWDEIVKKNNLVPTKLKEIAAFWFADIAFCSENLISSMNKSKELGFLGFRNSMKSFVSCIDKMRDYRFIP.

NADP(+) contacts are provided by residues 38–40, 66–67, 84–85, 108–109, and Gln142; these read TGI, RR, DV, and SW. Catalysis depends on residues Lys146 and Tyr178. Positions 146 and 178 each coordinate substrate. NADP(+)-binding positions include Tyr178, Val204, and 211 to 213; that span reads SMM. Residue Ser349 participates in substrate binding.

This sequence belongs to the short-chain dehydrogenases/reductases (SDR) family. Highly divergent. As to quaternary structure, homodimer. Expressed in internal phloem-associated parenchyma (IPAP) cells.

It is found in the cytoplasm. The protein resides in the cytosol. The enzyme catalyses (S)-8-oxocitronellyl enol + NADP(+) = (6E)-8-oxogeranial + NADPH + H(+). The catalysed reaction is (S)-8-oxocitronellyl enol + NAD(+) = (6E)-8-oxogeranial + NADH + H(+). Iridoid synthase that catalyzes the first step in generation of the iridoid ring scaffold using the linear monoterpene (6E)-8-oxogeranial as substrate. Iridoids comprise a large family of distinctive bicyclic monoterpenes that possess a wide range of pharmacological activities, including anticancer, anti-inflammatory, antifungal and antibacterial activities. In Catharanthus roseus (Madagascar periwinkle), this protein is (S)-8-oxocitronellyl enol synthase.